We begin with the raw amino-acid sequence, 97 residues long: MKGICSDAILVLATSMWMAFAIDFPLPMASERGQLDKTIVECLKNVNKCWFLSYIKPSEPICGSDQVTYSSDCHLCSKILFEGLNITKLYDGQCENS.

An N-terminal signal peptide occupies residues 1–21; that stretch reads MKGICSDAILVLATSMWMAFA. The Kazal-like domain maps to 36 to 96; sequence DKTIVECLKN…TKLYDGQCEN (61 aa). Cystine bridges form between Cys42/Cys76, Cys49/Cys73, and Cys62/Cys94. The N-linked (GlcNAc...) asparagine glycan is linked to Asn85.

It is found in the secreted. In terms of biological role, probable serine protease inhibitor. This chain is Serine protease inhibitor Kazal-type 8 (SPINK8), found in Homo sapiens (Human).